The following is a 185-amino-acid chain: uncharacterized protein (185 aa).

N-acetylmethionine is present on M1. 3 stretches are compositionally biased toward basic and acidic residues: residues M1 to Q18, T26 to E47, and S59 to E71. Disordered regions lie at residues M1–E71 and D155–L185. Positions L170 to L185 are enriched in acidic residues.

This is an uncharacterized protein from Saccharomyces cerevisiae (strain ATCC 204508 / S288c) (Baker's yeast).